Reading from the N-terminus, the 555-residue chain is F-box protein COS111 (555 aa).

Disordered stretches follow at residues 31-82 (MSVS…SVSN) and 124-147 (DHSIKSGVTRSTVSTVRPTSKQHH). Over residues 32 to 42 (SVSSRSSQEES) the composition is skewed to low complexity. The segment covering 48-61 (ESVSSLSMQEQQTE) has biased composition (polar residues). Residues 129–142 (SGVTRSTVSTVRPT) show a composition bias toward low complexity. In terms of domain architecture, F-box spans 196–246 (HKDLNSLPHEIMSKIVSHLDQRDVTMCLYVNKNMYSTAVRQLYKEPFFSST). Residues 327–346 (SSSSLSCSRTSSNSNSSTES) are compositionally biased toward low complexity. Residues 327–354 (SSSSLSCSRTSSNSNSSTESKPVKKRRS) form a disordered region.

In terms of biological role, F-box protein probably involved in ubiquitin conjugation pathway. The chain is F-box protein COS111 (COS111) from Yarrowia lipolytica (strain CLIB 122 / E 150) (Yeast).